The sequence spans 834 residues: Sodium/hydrogen exchanger 3 (834 aa).

The signal sequence occupies residues 1–25; that stretch reads MWGLGARGPDRGLLLALALGGLARA. The Extracellular portion of the chain corresponds to 26–51; the sequence is GGVEVEPGGAHGESGGFQVVTFEWAH. A helical transmembrane segment spans residues 52–74; sequence VQDPYVIALWILVASLAKIGFHL. Topologically, residues 75 to 82 are cytoplasmic; it reads SHKVTSVV. The chain crosses the membrane as a helical span at residues 83–102; the sequence is PESALLIVLGLVLGGIVWAA. The Extracellular portion of the chain corresponds to 103 to 111; that stretch reads DHIASFTLT. The chain crosses the membrane as a helical span at residues 112–129; sequence PTVFFFYLLPPIVLDAGY. The Cytoplasmic portion of the chain corresponds to 130–132; sequence FMP. Residues 133-168 traverse the membrane as a helical segment; it reads NRLFFGNLGTILLYAVVGTVWNAATTGLSLYGVFLS. Residues Gly138, Gly141, and Thr142 each coordinate a 1,2-diacyl-sn-glycero-3-phospho-(1D-myo-inositol). Topologically, residues 169–181 are extracellular; sequence GLMGDLQIGLLDF. A helical transmembrane segment spans residues 182 to 203; that stretch reads LLFGSLMAAVDPVAVLAVFEEV. Residues 204–205 are Cytoplasmic-facing; the sequence is HV. A helical transmembrane segment spans residues 206–237; it reads NEVLFIIVFGESLLNDAVTVVLYNVFESFVAL. At 238–244 the chain is on the extracellular side; the sequence is GGDNVTG. An N-linked (GlcNAc...) asparagine glycan is attached at Asn241. A helical membrane pass occupies residues 245–279; the sequence is VDCVKGIVSFFVVSLGGTLVGVVFAFLLSLVTRFT. At 280 to 281 the chain is on the cytoplasmic side; that stretch reads KH. Residues 282–304 traverse the membrane as a helical segment; it reads VRIIEPGFVFIISYLSYLTSEML. The Extracellular segment spans residues 305 to 306; the sequence is SL. The helical transmembrane segment at 307–323 threads the bilayer; sequence SAILAITFCGICCQKYV. The Cytoplasmic portion of the chain corresponds to 324-330; it reads KANISEQ. The helical transmembrane segment at 331–359 threads the bilayer; the sequence is SATTVRYTMKMLASSAETIIFMFLGISAV. At 360 to 367 the chain is on the extracellular side; sequence NPFIWTWN. A helical transmembrane segment spans residues 368–389; sequence TAFVLLTLVFISVYRAIGVVLQ. Residues 390–402 lie on the Cytoplasmic side of the membrane; sequence TWLLNRYRMVQLE. Met398 contacts a 1,2-diacyl-sn-glycero-3-phospho-(1D-myo-inositol). Residues 403 to 426 traverse the membrane as a helical segment; the sequence is PIDQVVLSYGGLRGAVAFALVVLL. Over 427–433 the chain is Extracellular; the sequence is DGDKVKE. A helical membrane pass occupies residues 434-467; the sequence is KNLFVSTTIIVVFFTVIFQGLTIKPLVQWLKVKR. The Cytoplasmic portion of the chain corresponds to 468 to 834; that stretch reads SEHREPRLNE…PAALPESTHM (367 aa). A 1,2-diacyl-sn-glycero-3-phospho-(1D-myo-inositol) is bound by residues Gln497, Ile498, and His500. A phosphoserine mark is found at Ser555 and Ser563. Residues 575-589 form an interaction with EZR region; that stretch reads RSSTVEASVSYLLRE. Positions 590–667 are interaction with NHERF4; it reads NVSAVCLDMQ…RKRLESFKST (78 aa). The interaction with AHCYL1 stretch occupies residues 591–695; the sequence is VSAVCLDMQS…AQKRRNSSIP (105 aa). Ser592 and Ser607 each carry phosphoserine. A Phosphoserine; by SGK1 modification is found at Ser663. A compositionally biased stretch (basic residues) spans 679–691; it reads KLYKRERAQKRRN. Residues 679-728 are disordered; sequence KLYKRERAQKRRNSSIPNGKLPMESPAQNFTIKEKDLELSDTEEPPNYDE. Residues 717–728 are compositionally biased toward acidic residues; that stretch reads LSDTEEPPNYDE. Phosphoserine is present on residues Ser718, Ser810, and Ser813. The tract at residues 814–834 is disordered; sequence FLQADGPEERPPAALPESTHM.

The protein belongs to the monovalent cation:proton antiporter 1 (CPA1) transporter (TC 2.A.36) family. In terms of assembly, homodimer. Found in the forms of complex and dynamic macromolecular complexes. Binds NHERF1 and NHERF2. Interacts with CHP1; increases SLC9A3 trafficking and activity at the plasma membrane. Interacts with CHP2 and SHANK2. Interacts with PDZK1 (via C-terminal PDZ domain). Interacts with NHERF4 and interaction decrease in response to elevated calcium ion levels. Interacts with AHCYL1; the interaction is required for SLC9A3 activity. Interacts with SNX27 (via PDZ domains); directs SLC9A3 membrane insertion from early endosomes to the plasma membrane. Interacts with EZR; interaction targets SLC9A3 to the apical membrane. Post-translationally, phosphorylated by PKA, which inhibits activity. Phosphorylation at Ser-663 by SGK1 is associated with increased abundance at the cell membrane. Phosphorylation at Ser-718 by CSNK2A1 regulates SLC9A3 activity through the formation of multiple signaling complexes.

It localises to the apical cell membrane. It is found in the cell membrane. The protein resides in the recycling endosome membrane. The protein localises to the early endosome membrane. It carries out the reaction Na(+)(in) + H(+)(out) = Na(+)(out) + H(+)(in). Seems to switch between active and inactive modes in response to various stimuli. Activated directly or indirectly by membrane phosphatidylinositol (PIs). Regulated by a variety of auxiliary proteins, which facilitate the maturation, cell surface expression and function of the transporter. Inhibited specifically by the drug tenapanor. In terms of biological role, plasma membrane Na(+)/H(+) antiporter. Exchanges intracellular H(+) ions for extracellular Na(+) in 1:1 stoichiometry, playing a key role in salt and fluid absorption and pH homeostasis. Major apical Na(+)/H(+) exchanger in kidney and intestine playing an important role in renal and intestine Na(+) absorption and blood pressure regulation. The sequence is that of Sodium/hydrogen exchanger 3 from Homo sapiens (Human).